The primary structure comprises 542 residues: L-ornithine N(5)-monooxygenase (542 aa).

Residues 45 to 53 (EKHEVFRWH) and glutamine 64 each bind FAD. Lysine 69 serves as a coordination point for substrate. 218 to 221 (SGQS) contributes to the NADP(+) binding site. Substrate is bound by residues 263–266 (NEIF) and asparagine 294. 294–296 (NYS) serves as a coordination point for NADP(+). Residues 443-472 (FFHDSSPSTASSSTVSTPPTSPETSRFSSP) form a disordered region. A compositionally biased stretch (low complexity) spans 447-472 (SSPSTASSSTVSTPPTSPETSRFSSP). 518 to 520 (TLL) serves as a coordination point for FAD. Serine 521 is a binding site for substrate.

Belongs to the lysine N(6)-hydroxylase/L-ornithine N(5)-oxygenase family. As to quaternary structure, homotetramer. FAD serves as cofactor.

The catalysed reaction is L-ornithine + NADPH + O2 = N(5)-hydroxy-L-ornithine + NADP(+) + H2O. It carries out the reaction L-ornithine + NADH + O2 = N(5)-hydroxy-L-ornithine + NAD(+) + H2O. Its pathway is siderophore biosynthesis. Its function is as follows. L-ornithine N(5)-monooxygenase; part of the gene cluster that mediates the biosynthesis of coprinoferrin, an acylated tripeptide hydroxamate siderophore. The biosynthesis of coprinoferrin depends on the hydroxylation of ornithine to N(5)-hydroxyornithine, catalyzed by the monooxygenase cpf2. The second step, the acylation of N(5)-hydroxy-L-ornithine to yield N(5)-hexanoyl-N(5)-hydroxyl-L-ornithine is catalyzed by a not yet identified acyltransferase. Finally, assembly of coprinoferrin is catalyzed by the nonribosomal peptide synthase (NRPS) cpf1 via amide bond formation between three N(5)-hexanoyl-N(5)-hydroxyl-L-ornithine molecules to release the linear trimer. Interestingly, proteins seemingly not directly related to biosynthesis, such as transcription factors, replication factors, and autophagy-related proteins, are conserved among the clusters homologous to the coprinoferrin cluster, suggesting that the cluster may also play developmental and cell biological functions. The chain is L-ornithine N(5)-monooxygenase from Coprinopsis cinerea (strain Okayama-7 / 130 / ATCC MYA-4618 / FGSC 9003) (Inky cap fungus).